A 335-amino-acid polypeptide reads, in one-letter code: MSERVISPEPVPDDADEITLRPSTLEAFVGQEPAKNALRIAIAAARKRGEPIDHILFAGPPGLGKTTLAHIIAREMGAAIRTTTGPVLEKTGDMAAIATALQNGDVLFIDEIHRMNPVVEEILYPAMEDFFIDVMIGEGPSARSIKLTLERFTLIGATTRQGLLSSPFRDRFGLLIRLNLYSPEDLEKIVTRSAEILRIPITPKGAAVIASRSRGTPRIANRLLRRVRDYAVVEGDGTITAEIAGAGLALLQIDELGLDDIDRRILSVIAGDFGGGPVGAKTIAISVGEEVRTIEEVYEPYLIQIGFVKRTPQGRETTPAALAHLKLNHSQKTLF.

Residues 1–181 are large ATPase domain (RuvB-L); that stretch reads MSERVISPEP…FGLLIRLNLY (181 aa). ATP is bound by residues leucine 20, arginine 21, glycine 62, lysine 65, threonine 66, threonine 67, 128 to 130, arginine 171, tyrosine 181, and arginine 218; that span reads EDF. Position 66 (threonine 66) interacts with Mg(2+). Residues 182-252 are small ATPAse domain (RuvB-S); it reads SPEDLEKIVT…IAGAGLALLQ (71 aa). A head domain (RuvB-H) region spans residues 255–335; it reads ELGLDDIDRR…KLNHSQKTLF (81 aa). Positions 310 and 315 each coordinate DNA.

It belongs to the RuvB family. In terms of assembly, homohexamer. Forms an RuvA(8)-RuvB(12)-Holliday junction (HJ) complex. HJ DNA is sandwiched between 2 RuvA tetramers; dsDNA enters through RuvA and exits via RuvB. An RuvB hexamer assembles on each DNA strand where it exits the tetramer. Each RuvB hexamer is contacted by two RuvA subunits (via domain III) on 2 adjacent RuvB subunits; this complex drives branch migration. In the full resolvosome a probable DNA-RuvA(4)-RuvB(12)-RuvC(2) complex forms which resolves the HJ.

It localises to the cytoplasm. The enzyme catalyses ATP + H2O = ADP + phosphate + H(+). Functionally, the RuvA-RuvB-RuvC complex processes Holliday junction (HJ) DNA during genetic recombination and DNA repair, while the RuvA-RuvB complex plays an important role in the rescue of blocked DNA replication forks via replication fork reversal (RFR). RuvA specifically binds to HJ cruciform DNA, conferring on it an open structure. The RuvB hexamer acts as an ATP-dependent pump, pulling dsDNA into and through the RuvAB complex. RuvB forms 2 homohexamers on either side of HJ DNA bound by 1 or 2 RuvA tetramers; 4 subunits per hexamer contact DNA at a time. Coordinated motions by a converter formed by DNA-disengaged RuvB subunits stimulates ATP hydrolysis and nucleotide exchange. Immobilization of the converter enables RuvB to convert the ATP-contained energy into a lever motion, pulling 2 nucleotides of DNA out of the RuvA tetramer per ATP hydrolyzed, thus driving DNA branch migration. The RuvB motors rotate together with the DNA substrate, which together with the progressing nucleotide cycle form the mechanistic basis for DNA recombination by continuous HJ branch migration. Branch migration allows RuvC to scan DNA until it finds its consensus sequence, where it cleaves and resolves cruciform DNA. The polypeptide is Holliday junction branch migration complex subunit RuvB (Methanoregula boonei (strain DSM 21154 / JCM 14090 / 6A8)).